We begin with the raw amino-acid sequence, 112 residues long: UPF0145 protein MmarC6_1828 (112 aa).

Belongs to the UPF0145 family.

In Methanococcus maripaludis (strain C6 / ATCC BAA-1332), this protein is UPF0145 protein MmarC6_1828.